We begin with the raw amino-acid sequence, 723 residues long: Envelope glycoprotein H (723 aa).

Residues 1-23 (MSPATRFTVISCLVVSLITPSET) form the signal peptide. The Virion surface segment spans residues 24–700 (SSWFDPFIEW…IIDIRQTSIF (677 aa)). Residues Asn39, Asn45, Asn144, and Asn174 are each glycosylated (N-linked (GlcNAc...) asparagine; by host). Positions 197–263 (HQFAIVLTFT…QSYRDDLLIV (67 aa)) are interaction with gL. Residues Asn270, Asn340, Asn411, Asn543, Asn621, and Asn681 are each glycosylated (N-linked (GlcNAc...) asparagine; by host). The chain crosses the membrane as a helical span at residues 701-721 (MIMLYCSLGVLLLYGLYRLLH). The Intravirion segment spans residues 722–723 (MI).

It belongs to the herpesviridae glycoprotein H family. In terms of assembly, interacts with glycoprotein L (gL); this interaction is necessary for the correct processing and cell surface expression of gH. The heterodimer gH/gL seems to interact with gB trimers during fusion. N-glycosylated, O-glycosylated, and sialylated.

It localises to the virion membrane. The protein localises to the host cell membrane. Its subcellular location is the host endosome membrane. In terms of biological role, the heterodimer glycoprotein H-glycoprotein L is required for the fusion of viral and plasma membranes leading to virus entry into the host cell. Following initial binding to host receptor, membrane fusion is mediated by the fusion machinery composed of gB and the heterodimer gH/gL. May also be involved in the fusion between the virion envelope and the outer nuclear membrane during virion morphogenesis. This Guinea pig cytomegalovirus (strain 22122) (GPCMV) protein is Envelope glycoprotein H.